The sequence spans 338 residues: MKVYYDKDADLSIIKGKKVAIIGYGSQGHAHAQNLKESGVDVIVGLRKDGASWKKAEAAGHKVKEVAEAVKKADVVMILLPDESQPEVYHKDIAPNLKKGAALAFAHGFNIHYNQIVPPADVDVIMVAPKGPGHTVRSEYLKGGGVPTLIAVYQDKTGKARDVALSYAAANGGTKGGVIETNFREETETDLFGEQAVLCGGAVELVKAGFETLVEAGYAPEMAYFECLHELKLIVDLMYEGGIANMNYSISNNAEYGEYVTGPEVVTAATKEAMKKALYRIQSGEYAKMFILEGKTNYPSMTARRRLTAAHPIEKVGAELRAMMPWIAKNKLVDQSKN.

Residues 1–181 (MKVYYDKDAD…GGTKGGVIET (181 aa)) form the KARI N-terminal Rossmann domain. Residues 24–27 (YGSQ), Arg-47, Ser-52, and 82–85 (DESQ) each bind NADP(+). His-107 is an active-site residue. NADP(+) is bound at residue Gly-133. In terms of domain architecture, KARI C-terminal knotted spans 182-327 (NFREETETDL…AELRAMMPWI (146 aa)). Mg(2+)-binding residues include Asp-190, Glu-194, Glu-226, and Glu-230. Ser-251 contributes to the substrate binding site.

Belongs to the ketol-acid reductoisomerase family. Requires Mg(2+) as cofactor.

The catalysed reaction is (2R)-2,3-dihydroxy-3-methylbutanoate + NADP(+) = (2S)-2-acetolactate + NADPH + H(+). It catalyses the reaction (2R,3R)-2,3-dihydroxy-3-methylpentanoate + NADP(+) = (S)-2-ethyl-2-hydroxy-3-oxobutanoate + NADPH + H(+). Its pathway is amino-acid biosynthesis; L-isoleucine biosynthesis; L-isoleucine from 2-oxobutanoate: step 2/4. It functions in the pathway amino-acid biosynthesis; L-valine biosynthesis; L-valine from pyruvate: step 2/4. Functionally, involved in the biosynthesis of branched-chain amino acids (BCAA). Catalyzes an alkyl-migration followed by a ketol-acid reduction of (S)-2-acetolactate (S2AL) to yield (R)-2,3-dihydroxy-isovalerate. In the isomerase reaction, S2AL is rearranged via a Mg-dependent methyl migration to produce 3-hydroxy-3-methyl-2-ketobutyrate (HMKB). In the reductase reaction, this 2-ketoacid undergoes a metal-dependent reduction by NADPH to yield (R)-2,3-dihydroxy-isovalerate. The polypeptide is Ketol-acid reductoisomerase (NADP(+)) (Chromobacterium violaceum (strain ATCC 12472 / DSM 30191 / JCM 1249 / CCUG 213 / NBRC 12614 / NCIMB 9131 / NCTC 9757 / MK)).